Reading from the N-terminus, the 180-residue chain is UPF0340 protein llmg_0465 (180 aa).

This sequence belongs to the UPF0340 family.

In Lactococcus lactis subsp. cremoris (strain MG1363), this protein is UPF0340 protein llmg_0465.